Here is a 359-residue protein sequence, read N- to C-terminus: Peptide methionine sulfoxide reductase MsrA/MsrB (359 aa).

Residues 36 to 189 (RVIYLAGGCF…PSGYCHIDLK (154 aa)) form a peptide methionine sulfoxide reductase A region. C44 is a catalytic residue. A MsrB domain is found at 206–329 (DEVLKKKLTK…NSAALRFIPL (124 aa)). C318 serves as the catalytic Nucleophile.

The protein in the N-terminal section; belongs to the MsrA Met sulfoxide reductase family. It in the C-terminal section; belongs to the MsrB Met sulfoxide reductase family.

The catalysed reaction is L-methionyl-[protein] + [thioredoxin]-disulfide + H2O = L-methionyl-(S)-S-oxide-[protein] + [thioredoxin]-dithiol. It carries out the reaction [thioredoxin]-disulfide + L-methionine + H2O = L-methionine (S)-S-oxide + [thioredoxin]-dithiol. The enzyme catalyses L-methionyl-[protein] + [thioredoxin]-disulfide + H2O = L-methionyl-(R)-S-oxide-[protein] + [thioredoxin]-dithiol. In terms of biological role, has an important function as a repair enzyme for proteins that have been inactivated by oxidation. Catalyzes the reversible oxidation-reduction of methionine sulfoxide in proteins to methionine. This is Peptide methionine sulfoxide reductase MsrA/MsrB (msrAB) from Helicobacter pylori (strain ATCC 700392 / 26695) (Campylobacter pylori).